A 600-amino-acid polypeptide reads, in one-letter code: Glutamine--fructose-6-phosphate aminotransferase [isomerizing] (600 aa).

The Nucleophile; for GATase activity role is filled by Cys2. A Glutamine amidotransferase type-2 domain is found at 2 to 217 (CGIVGYIGQL…DKEMVIVTDD (216 aa)). SIS domains follow at residues 283–422 (IAAA…KNGI) and 452–590 (IARE…VDKP). Catalysis depends on Lys595, which acts as the For Fru-6P isomerization activity.

As to quaternary structure, homodimer.

The protein localises to the cytoplasm. The enzyme catalyses D-fructose 6-phosphate + L-glutamine = D-glucosamine 6-phosphate + L-glutamate. Its function is as follows. Catalyzes the first step in hexosamine metabolism, converting fructose-6P into glucosamine-6P using glutamine as a nitrogen source. The chain is Glutamine--fructose-6-phosphate aminotransferase [isomerizing] (glmS) from Bacillus spizizenii (strain ATCC 23059 / NRRL B-14472 / W23) (Bacillus subtilis subsp. spizizenii).